A 207-amino-acid chain; its full sequence is Large ribosomal subunit protein bL25 (207 aa).

The interval 171–207 (EEETVVTVSAPRAEEEPTTTEAPEPEAVHGKDEEPVE) is disordered. A compositionally biased stretch (basic and acidic residues) spans 196–207 (EAVHGKDEEPVE).

Belongs to the bacterial ribosomal protein bL25 family. CTC subfamily. Part of the 50S ribosomal subunit; part of the 5S rRNA/L5/L18/L25 subcomplex. Contacts the 5S rRNA. Binds to the 5S rRNA independently of L5 and L18.

Its function is as follows. This is one of the proteins that binds to the 5S RNA in the ribosome where it forms part of the central protuberance. This Listeria monocytogenes serotype 4b (strain F2365) protein is Large ribosomal subunit protein bL25.